The primary structure comprises 91 residues: Small ribosomal subunit protein bS20 (91 aa).

Over residues 1–18 the composition is skewed to basic and acidic residues; sequence MPLHKSAEKRLRQSERRN. Residues 1–26 are disordered; that stretch reads MPLHKSAEKRLRQSERRNARNRSRKK.

The protein belongs to the bacterial ribosomal protein bS20 family.

Its function is as follows. Binds directly to 16S ribosomal RNA. In Pelodictyon phaeoclathratiforme (strain DSM 5477 / BU-1), this protein is Small ribosomal subunit protein bS20.